We begin with the raw amino-acid sequence, 27 residues long: Histone H1.3, embryonic (27 aa).

In terms of domain architecture, H15 spans 1–27 (HVVAAITALKERGGSSHQALKKYKAAN).

Belongs to the histone H1/H5 family.

The protein resides in the nucleus. The protein localises to the chromosome. Functionally, histones H1 are necessary for the condensation of nucleosome chains into higher-order structures. The polypeptide is Histone H1.3, embryonic (Parechinus angulosus (Angulate sea urchin)).